The chain runs to 153 residues: Small ribosomal subunit protein eS19 (153 aa).

Disordered regions lie at residues tyrosine 77–glycine 99 and glycine 113–aspartate 139. Residues asparagine 120–leucine 133 are compositionally biased toward basic and acidic residues.

The protein belongs to the eukaryotic ribosomal protein eS19 family. Part of the 30S ribosomal subunit.

Its function is as follows. May be involved in maturation of the 30S ribosomal subunit. The sequence is that of Small ribosomal subunit protein eS19 from Haloarcula marismortui (strain ATCC 43049 / DSM 3752 / JCM 8966 / VKM B-1809) (Halobacterium marismortui).